Here is a 379-residue protein sequence, read N- to C-terminus: 3-dehydroquinate synthase (379 aa).

Residues 67-72 (PGEKNK), 101-105 (GIILD), 125-126 (TT), Lys138, and Lys147 contribute to the NAD(+) site. Residues Glu180, His242, and His258 each coordinate Zn(2+).

It belongs to the sugar phosphate cyclases superfamily. Dehydroquinate synthase family. NAD(+) serves as cofactor. It depends on Co(2+) as a cofactor. The cofactor is Zn(2+).

It is found in the cytoplasm. The enzyme catalyses 7-phospho-2-dehydro-3-deoxy-D-arabino-heptonate = 3-dehydroquinate + phosphate. Its pathway is metabolic intermediate biosynthesis; chorismate biosynthesis; chorismate from D-erythrose 4-phosphate and phosphoenolpyruvate: step 2/7. In terms of biological role, catalyzes the conversion of 3-deoxy-D-arabino-heptulosonate 7-phosphate (DAHP) to dehydroquinate (DHQ). This is 3-dehydroquinate synthase from Chlamydia caviae (strain ATCC VR-813 / DSM 19441 / 03DC25 / GPIC) (Chlamydophila caviae).